The primary structure comprises 312 residues: DNA-directed RNA polymerase subunit alpha (312 aa).

The interval 1-229 (MLQYQIDRIE…ELFQPLATVT (229 aa)) is alpha N-terminal domain (alpha-NTD). An alpha C-terminal domain (alpha-CTD) region spans residues 239 to 312 (EPTAEAQIPL…IQIPQSRTSA (74 aa)).

The protein belongs to the RNA polymerase alpha chain family. As to quaternary structure, in cyanobacteria the RNAP catalytic core is composed of 2 alpha, 1 beta, 1 beta', 1 gamma and 1 omega subunit. When a sigma factor is associated with the core the holoenzyme is formed, which can initiate transcription.

The enzyme catalyses RNA(n) + a ribonucleoside 5'-triphosphate = RNA(n+1) + diphosphate. In terms of biological role, DNA-dependent RNA polymerase catalyzes the transcription of DNA into RNA using the four ribonucleoside triphosphates as substrates. This chain is DNA-directed RNA polymerase subunit alpha, found in Synechococcus sp. (strain WH7803).